A 354-amino-acid chain; its full sequence is UDP-N-acetylglucosamine--N-acetylmuramyl-(pentapeptide) pyrophosphoryl-undecaprenol N-acetylglucosamine transferase (354 aa).

UDP-N-acetyl-alpha-D-glucosamine is bound by residues 15 to 17, Asn-127, Arg-163, Ser-191, Ile-244, 263 to 268, and Gln-288; these read TGG and ALTVSE.

This sequence belongs to the glycosyltransferase 28 family. MurG subfamily.

The protein resides in the cell inner membrane. The catalysed reaction is di-trans,octa-cis-undecaprenyl diphospho-N-acetyl-alpha-D-muramoyl-L-alanyl-D-glutamyl-meso-2,6-diaminopimeloyl-D-alanyl-D-alanine + UDP-N-acetyl-alpha-D-glucosamine = di-trans,octa-cis-undecaprenyl diphospho-[N-acetyl-alpha-D-glucosaminyl-(1-&gt;4)]-N-acetyl-alpha-D-muramoyl-L-alanyl-D-glutamyl-meso-2,6-diaminopimeloyl-D-alanyl-D-alanine + UDP + H(+). It participates in cell wall biogenesis; peptidoglycan biosynthesis. In terms of biological role, cell wall formation. Catalyzes the transfer of a GlcNAc subunit on undecaprenyl-pyrophosphoryl-MurNAc-pentapeptide (lipid intermediate I) to form undecaprenyl-pyrophosphoryl-MurNAc-(pentapeptide)GlcNAc (lipid intermediate II). The protein is UDP-N-acetylglucosamine--N-acetylmuramyl-(pentapeptide) pyrophosphoryl-undecaprenol N-acetylglucosamine transferase of Aliivibrio fischeri (strain ATCC 700601 / ES114) (Vibrio fischeri).